Consider the following 1400-residue polypeptide: DNA-directed RNA polymerase subunit beta' (1400 aa).

Residues Cys71, Cys73, Cys86, and Cys89 each contribute to the Zn(2+) site. 3 residues coordinate Mg(2+): Asp462, Asp464, and Asp466. The Zn(2+) site is built by Cys810, Cys884, Cys891, and Cys894.

It belongs to the RNA polymerase beta' chain family. In terms of assembly, the RNAP catalytic core consists of 2 alpha, 1 beta, 1 beta' and 1 omega subunit. When a sigma factor is associated with the core the holoenzyme is formed, which can initiate transcription. The cofactor is Mg(2+). It depends on Zn(2+) as a cofactor.

The catalysed reaction is RNA(n) + a ribonucleoside 5'-triphosphate = RNA(n+1) + diphosphate. Functionally, DNA-dependent RNA polymerase catalyzes the transcription of DNA into RNA using the four ribonucleoside triphosphates as substrates. In Rhodopseudomonas palustris (strain TIE-1), this protein is DNA-directed RNA polymerase subunit beta'.